The chain runs to 533 residues: Suppressor of cytokine signaling 6 (533 aa).

2 disordered regions span residues 54–136 (CDIG…WPLR) and 177–199 (ELRD…PGDL). Residues 59–69 (EDEKGKNRSKS) show a composition bias toward basic and acidic residues. A compositionally biased stretch (basic residues) spans 76 to 88 (LKRRLSAKQKTKG). Positions 177–189 (ELRDLQPEPRPES) are enriched in basic and acidic residues. The SH2 domain occupies 382–489 (WYWGPITRWE…TYPVRLTNPV (108 aa)). The region spanning 484–533 (RLTNPVSRFMQVRSLQYLCRFVIRQYTRIDLIQKLPLPNKMKDYLQEKHY) is the SOCS box domain.

As to quaternary structure, interacts with KIT (phosphorylated). Interacts with RBCK1. Interacts with phosphorylated IRS4. Interacts with PIM3.

Its pathway is protein modification; protein ubiquitination. In terms of biological role, SOCS family proteins form part of a classical negative feedback system that regulates cytokine signal transduction. May be a substrate recognition component of a SCF-like ECS (Elongin BC-CUL2/5-SOCS-box protein) E3 ubiquitin-protein ligase complex which mediates the ubiquitination and subsequent proteasomal degradation of target proteins. Regulates KIT degradation by ubiquitination of the tyrosine-phosphorylated receptor. The sequence is that of Suppressor of cytokine signaling 6 (Socs6) from Mus musculus (Mouse).